A 348-amino-acid polypeptide reads, in one-letter code: Fe-S cluster assembly protein DRE2 (348 aa).

An N-terminal SAM-like domain region spans residues 1 to 158; the sequence is MSQYKTGLLL…LPTFKKASSS (158 aa). The disordered stretch occupies residues 137–170; that stretch reads KTNNTKLQSGSKLPTFKKASSSTSNLPSFKKADH. Residues 144–163 show a composition bias toward polar residues; sequence QSGSKLPTFKKASSSTSNLP. A linker region spans residues 159-242; the sequence is TSNLPSFKKA…EEELIDEDGS (84 aa). S206 is subject to Phosphoserine. Residues C252, C263, C266, and C268 each contribute to the [2Fe-2S] cluster site. The interval 252–268 is fe-S binding site A; the sequence is CGKSKTKKKKACKDCTC. C311, C314, C322, and C325 together coordinate [4Fe-4S] cluster. 2 short sequence motifs (cx2C motif) span residues 311 to 314 and 322 to 325; these read CGSC and CSGC. Residues 311 to 325 form a fe-S binding site B region; that stretch reads CGSCSLGDAFRCSGC.

This sequence belongs to the anamorsin family. In terms of assembly, monomer. Interacts with TAH18. Interacts with MIA40. [2Fe-2S] cluster is required as a cofactor. It depends on [4Fe-4S] cluster as a cofactor. Post-translationally, ubiquitinated.

It is found in the cytoplasm. The protein localises to the mitochondrion intermembrane space. Its function is as follows. Component of the cytosolic iron-sulfur (Fe-S) protein assembly (CIA) machinery required for the maturation of extramitochondrial Fe-S proteins. Part of an electron transfer chain functioning in an early step of cytosolic Fe-S biogenesis, facilitating the de novo assembly of a [4Fe-4S] cluster on the scaffold complex CFD1-NBP35. Electrons are transferred to DRE2 from NADPH via the FAD- and FMN-containing protein TAH18. TAH18-DRE2 are also required for the assembly of the diferric tyrosyl radical cofactor of ribonucleotide reductase (RNR), probably by providing electrons for reduction during radical cofactor maturation in the catalytic small subunit RNR2. Has anti-apoptotic effects in the cell. Involved in negative control of H(2)O(2)-induced cell death. The polypeptide is Fe-S cluster assembly protein DRE2 (Saccharomyces cerevisiae (strain ATCC 204508 / S288c) (Baker's yeast)).